The sequence spans 192 residues: Sporulation initiation phosphotransferase B (192 aa).

At His-30 the chain carries Phosphohistidine.

As to quaternary structure, homodimer. Dimerization is essential for activity as both monomers contribute to the formation of the active site. In terms of processing, phosphorylated by spo0F.

The protein localises to the cytoplasm. Key element in the phosphorelay regulating sporulation initiation. Acts on spo0A. Mediates reversible phosphoryl transfer from spo0F to spo0A. The protein is Sporulation initiation phosphotransferase B (spo0B) of Bacillus subtilis (strain 168).